The primary structure comprises 340 residues: Replication factor C subunit 5 (340 aa).

At methionine 1 the chain carries N-acetylmethionine. ATP is bound at residue 60 to 67; sequence GPPGTGKT.

It belongs to the activator 1 small subunits family. Subunit of the RFC complex, an heteropentameric complex consisting of a large subunit RFC1 and four small subunits RFC2, RFC3, RFC4 and RFC5; the RFC complex interacts with PCNA. Forms an heterotetrameric complex with RFC2, RFC3 and RFC4; this complex has ATPase activity but is not stimulated by PCNA. The heterotetramer of subunits RFC2, RFC3, RFC4 and RFC5 interacts with RAD17.

The protein localises to the nucleus. Its function is as follows. Subunit of the replication factor C (RFC) complex which acts during elongation of primed DNA templates by DNA polymerases delta and epsilon, and is necessary for ATP-dependent loading of proliferating cell nuclear antigen (PCNA) onto primed DNA. This Homo sapiens (Human) protein is Replication factor C subunit 5 (RFC5).